The sequence spans 55 residues: Large ribosomal subunit protein bL32 (55 aa).

Residues methionine 1 to leucine 27 are disordered.

The protein belongs to the bacterial ribosomal protein bL32 family.

The sequence is that of Large ribosomal subunit protein bL32 from Yersinia enterocolitica serotype O:8 / biotype 1B (strain NCTC 13174 / 8081).